Reading from the N-terminus, the 214-residue chain is uncharacterized protein (214 aa).

Helical transmembrane passes span 18-38, 51-71, 80-100, 108-128, and 145-165; these read LLLL…NTFV, DLAL…IVAG, ILVL…VLLV, LLVL…AFNV, and FFGV…GYII.

It localises to the cell membrane. This is an uncharacterized protein from Geobacillus stearothermophilus (Bacillus stearothermophilus).